The following is a 181-amino-acid chain: MAVDAQNLVWIDMEMTGLHPEVDVVLEIATIVTDANLNILAEGPVLAIHQSDDVLNNMNQWCIDTHGKSGLTERSRKSTVDEQTAVAETIRFLEKYVPKGASPLCGNTIGQDRRFMVKYMPELEDYFHYRNIDVSTLKELVKRWKPEVLEGFSKKGVHLALDDIRESIAELVFYRQHIFNI.

Residues 8-171 (LVWIDMEMTG…DDIRESIAEL (164 aa)) enclose the Exonuclease domain. Tyr129 is a catalytic residue.

The protein belongs to the oligoribonuclease family.

It is found in the cytoplasm. Functionally, 3'-to-5' exoribonuclease specific for small oligoribonucleotides. This Pseudoalteromonas atlantica (strain T6c / ATCC BAA-1087) protein is Oligoribonuclease.